A 295-amino-acid chain; its full sequence is Pyridoxal 5'-phosphate synthase subunit PdxS (295 aa).

Aspartate 25 contacts D-ribose 5-phosphate. Residue lysine 82 is the Schiff-base intermediate with D-ribose 5-phosphate of the active site. Glycine 154 provides a ligand contact to D-ribose 5-phosphate. Arginine 166 contributes to the D-glyceraldehyde 3-phosphate binding site. Residues glycine 215 and 236–237 (GS) each bind D-ribose 5-phosphate.

This sequence belongs to the PdxS/SNZ family. As to quaternary structure, in the presence of PdxT, forms a dodecamer of heterodimers.

It carries out the reaction aldehydo-D-ribose 5-phosphate + D-glyceraldehyde 3-phosphate + L-glutamine = pyridoxal 5'-phosphate + L-glutamate + phosphate + 3 H2O + H(+). It functions in the pathway cofactor biosynthesis; pyridoxal 5'-phosphate biosynthesis. Its function is as follows. Catalyzes the formation of pyridoxal 5'-phosphate from ribose 5-phosphate (RBP), glyceraldehyde 3-phosphate (G3P) and ammonia. The ammonia is provided by the PdxT subunit. Can also use ribulose 5-phosphate and dihydroxyacetone phosphate as substrates, resulting from enzyme-catalyzed isomerization of RBP and G3P, respectively. The polypeptide is Pyridoxal 5'-phosphate synthase subunit PdxS (Macrococcus caseolyticus (strain JCSC5402) (Macrococcoides caseolyticum)).